The sequence spans 363 residues: MLSSSSSSTVEQPSRGGSPGINAVSSDVLRSNILTRLDGSSLAALSCTCSNLNSFCSDESLWRQQCSATWPSTSDTRVQSIISTFPDGHRTFFSDSFPFLEHDVGINLPPSVDTSELISAVDIFYKDDVIFSRVHVTETVSGWFLCSPMRVDLVEPKELIPTRVLVTDQCKDDTWKSDLEENLSLSWILIDPTCKRAADVSTRKPVSVHRHWLTGEVHVKFSSIFVVGNKKRSEQVEFTVTVVLAVFNRREEETAVMQIREVSLVAEDKDGRNLGGKVSLEILVAAMGMKRRFRAGGEEEGKEKYIEYMERKTAKAEMKWRRGKETAMETAACWIAVLLLGFLLCFYLFMHKNLVAIMKKLIK.

Residues 1–23 (MLSSSSSSTVEQPSRGGSPGINA) are disordered. Positions 27–66 (DVLRSNILTRLDGSSLAALSCTCSNLNSFCSDESLWRQQC) constitute an F-box domain.

The protein is F-box protein At3g44326 of Arabidopsis thaliana (Mouse-ear cress).